A 293-amino-acid chain; its full sequence is 4-hydroxy-tetrahydrodipicolinate synthase (293 aa).

Residue Thr47 participates in pyruvate binding. Tyr136 serves as the catalytic Proton donor/acceptor. The active-site Schiff-base intermediate with substrate is Lys164. Position 206 (Ile206) interacts with pyruvate.

This sequence belongs to the DapA family. Homotetramer; dimer of dimers.

The protein resides in the cytoplasm. The enzyme catalyses L-aspartate 4-semialdehyde + pyruvate = (2S,4S)-4-hydroxy-2,3,4,5-tetrahydrodipicolinate + H2O + H(+). It participates in amino-acid biosynthesis; L-lysine biosynthesis via DAP pathway; (S)-tetrahydrodipicolinate from L-aspartate: step 3/4. Catalyzes the condensation of (S)-aspartate-beta-semialdehyde [(S)-ASA] and pyruvate to 4-hydroxy-tetrahydrodipicolinate (HTPA). The polypeptide is 4-hydroxy-tetrahydrodipicolinate synthase (Listeria monocytogenes serotype 4b (strain CLIP80459)).